Consider the following 235-residue polypeptide: Aspartate/glutamate leucyltransferase (235 aa).

It belongs to the R-transferase family. Bpt subfamily.

It is found in the cytoplasm. It carries out the reaction N-terminal L-glutamyl-[protein] + L-leucyl-tRNA(Leu) = N-terminal L-leucyl-L-glutamyl-[protein] + tRNA(Leu) + H(+). The enzyme catalyses N-terminal L-aspartyl-[protein] + L-leucyl-tRNA(Leu) = N-terminal L-leucyl-L-aspartyl-[protein] + tRNA(Leu) + H(+). Functions in the N-end rule pathway of protein degradation where it conjugates Leu from its aminoacyl-tRNA to the N-termini of proteins containing an N-terminal aspartate or glutamate. The protein is Aspartate/glutamate leucyltransferase of Pseudomonas putida (strain GB-1).